We begin with the raw amino-acid sequence, 406 residues long: tRNA-specific 2-thiouridylase MnmA (406 aa).

ATP-binding positions include Gly42–Ser49 and Leu68. The active-site Nucleophile is Cys129. The cysteines at positions 129 and 239 are disulfide-linked. Gly154 contacts ATP. The interaction with tRNA stretch occupies residues Lys189–Gln191. Cys239 functions as the Cysteine persulfide intermediate in the catalytic mechanism. The segment at Arg344–Tyr345 is interaction with tRNA.

It belongs to the MnmA/TRMU family.

It localises to the cytoplasm. The enzyme catalyses S-sulfanyl-L-cysteinyl-[protein] + uridine(34) in tRNA + AH2 + ATP = 2-thiouridine(34) in tRNA + L-cysteinyl-[protein] + A + AMP + diphosphate + H(+). In terms of biological role, catalyzes the 2-thiolation of uridine at the wobble position (U34) of tRNA, leading to the formation of s(2)U34. The protein is tRNA-specific 2-thiouridylase MnmA of Prochlorococcus marinus (strain SARG / CCMP1375 / SS120).